A 305-amino-acid polypeptide reads, in one-letter code: UDP-N-acetylenolpyruvoylglucosamine reductase (305 aa).

Residues 37–202 enclose the FAD-binding PCMH-type domain; the sequence is GIGGPARFLA…LSVTFNLEPK (166 aa). Arg-183 is an active-site residue.

It belongs to the MurB family. FAD serves as cofactor.

It localises to the cytoplasm. The enzyme catalyses UDP-N-acetyl-alpha-D-muramate + NADP(+) = UDP-N-acetyl-3-O-(1-carboxyvinyl)-alpha-D-glucosamine + NADPH + H(+). It participates in cell wall biogenesis; peptidoglycan biosynthesis. In terms of biological role, cell wall formation. In Rhodopirellula baltica (strain DSM 10527 / NCIMB 13988 / SH1), this protein is UDP-N-acetylenolpyruvoylglucosamine reductase.